The primary structure comprises 642 residues: RNA polymerase sigma factor RpoD (642 aa).

The disordered stretch occupies residues histidine 199–glutamate 228. The span at asparagine 212–glutamate 228 shows a compositional bias: acidic residues. The sigma-70 factor domain-2 stretch occupies residues methionine 403 to threonine 473. The Interaction with polymerase core subunit RpoC signature appears at aspartate 427 to glutamine 430. The segment at glutamate 482–alanine 558 is sigma-70 factor domain-3. A sigma-70 factor domain-4 region spans residues isoleucine 571 to histidine 624. Positions leucine 597–alanine 616 form a DNA-binding region, H-T-H motif.

It belongs to the sigma-70 factor family. RpoD/SigA subfamily. Interacts transiently with the RNA polymerase catalytic core.

Its subcellular location is the cytoplasm. Its function is as follows. Sigma factors are initiation factors that promote the attachment of RNA polymerase to specific initiation sites and are then released. This sigma factor is the primary sigma factor during exponential growth. The protein is RNA polymerase sigma factor RpoD of Neisseria gonorrhoeae.